Reading from the N-terminus, the 454-residue chain is CCA-adding enzyme (454 aa).

Positions 59 and 62 each coordinate ATP. 2 residues coordinate CTP: Ser-59 and Arg-62. Residues Asp-71, Asp-73, and Asp-125 each coordinate Mg(2+). 3 residues coordinate ATP: His-148, Lys-167, and Tyr-176. CTP-binding residues include His-148, Lys-167, and Tyr-176.

Belongs to the tRNA nucleotidyltransferase/poly(A) polymerase family. Archaeal CCA-adding enzyme subfamily. As to quaternary structure, homodimer. Requires Mg(2+) as cofactor.

It carries out the reaction a tRNA precursor + 2 CTP + ATP = a tRNA with a 3' CCA end + 3 diphosphate. The catalysed reaction is a tRNA with a 3' CCA end + 2 CTP + ATP = a tRNA with a 3' CCACCA end + 3 diphosphate. Its function is as follows. Catalyzes the addition and repair of the essential 3'-terminal CCA sequence in tRNAs without using a nucleic acid template. Adds these three nucleotides in the order of C, C, and A to the tRNA nucleotide-73, using CTP and ATP as substrates and producing inorganic pyrophosphate. tRNA 3'-terminal CCA addition is required both for tRNA processing and repair. Also involved in tRNA surveillance by mediating tandem CCA addition to generate a CCACCA at the 3' terminus of unstable tRNAs. While stable tRNAs receive only 3'-terminal CCA, unstable tRNAs are marked with CCACCA and rapidly degraded. The sequence is that of CCA-adding enzyme from Methanosarcina acetivorans (strain ATCC 35395 / DSM 2834 / JCM 12185 / C2A).